We begin with the raw amino-acid sequence, 115 residues long: Mediator of RNA polymerase II transcription subunit 22 (115 aa).

Belongs to the Mediator complex subunit 22 family. Component of the Mediator complex.

The protein localises to the nucleus. In terms of biological role, component of the Mediator complex, a coactivator involved in the regulated transcription of nearly all RNA polymerase II-dependent genes. Mediator functions as a bridge to convey information from gene-specific regulatory proteins to the basal RNA polymerase II transcription machinery. Mediator is recruited to promoters by direct interactions with regulatory proteins and serves as a scaffold for the assembly of a functional preinitiation complex with RNA polymerase II and the general transcription factors. In Candida albicans (strain SC5314 / ATCC MYA-2876) (Yeast), this protein is Mediator of RNA polymerase II transcription subunit 22 (SRB6).